Consider the following 1447-residue polypeptide: Baculoviral IAP repeat-containing protein 1b (1447 aa).

BIR repeat units follow at residues Glu60–Leu127, Glu159–Leu227, and Glu278–Leu345. Residues Cys315, Cys318, His335, and Cys342 each coordinate Zn(2+). Residues Ser508 to Glu802 enclose the NACHT domain. ATP is bound at residue Lys520.

Component of the NLRC4 inflammasome, at least composed of NLRC4, caspase-1 (CASP1) and some NAIP protein. Interacts with S.typhimurium (Salmonella) PrgJ and B.thailandensis BsaK.

In terms of biological role, sensor component of the NLRC4 inflammasome that specifically recognizes and binds type III secretion system (T3SS) rod proteins such as S.typhimurium (Salmonella) PrgJ and B.thailandensis BsaK from pathogenic bacteria. Association of pathogenic bacteria proteins drives in turn drive assembly and activation of the NLRC4 inflammasome, promoting caspase-1 activation, cytokine production and macrophage pyroptosis. The NLRC4 inflammasome is activated as part of the innate immune response to a range of intracellular bacteria. The NLRC4 inflammasome senses Gram-negative bacteria such as L.pneumophila and P.aeruginosa, enteric pathogens S.typhimurium (Salmonella) and S.flexneri. Prevents motor-neuron apoptosis induced by a variety of signals. In Mus musculus (Mouse), this protein is Baculoviral IAP repeat-containing protein 1b (Naip2).